The sequence spans 380 residues: MDFNLNDEQELFVAGIRELMASENWEAYFAECDRDSVYPERFVKALADMGIDSLLIPEEHGGLEAGFVTVAAVWMELGRLGAPTYVLYQLPGGFNTFLREGTQEQIDKIMAFQGTGKQMWNSAITEPGAGSDVGSLKTTYTRKNGKVYLNGSKCFITSSAYTPYIVVMARDGASPDKPIYTEWFVDMSKPGIKVNKLEKLGLRMDSCCEINFDDVELDEKDMFGREGNGFNRVKEEFDHERFLVALTNYGTAMCAFEDAARYANQRVQFGETIGRFQLIQEKFAHMAIKLNSMKNMLLEAAWKADNGTITSGDAAMCKYFCANAAFDVVDSAMQVLGGVGIAGNHRITRFWRDLRVDRVSGGSDEMQILTLGRAVLKQYR.

The protein belongs to the acyl-CoA dehydrogenase family. Homotetramer. FAD is required as a cofactor.

It is found in the cytoplasm. The catalysed reaction is 4-(trimethylamino)butanoyl-CoA + oxidized [electron-transfer flavoprotein] + H(+) = crotonobetainyl-CoA + reduced [electron-transfer flavoprotein]. Its pathway is amine and polyamine metabolism; carnitine metabolism. Catalyzes the reduction of crotonobetainyl-CoA to gamma-butyrobetainyl-CoA. The sequence is that of Crotonobetainyl-CoA reductase from Citrobacter koseri (strain ATCC BAA-895 / CDC 4225-83 / SGSC4696).